Reading from the N-terminus, the 195-residue chain is ATP-dependent Clp protease proteolytic subunit (195 aa).

The Nucleophile role is filled by Ser94. His119 is an active-site residue.

It belongs to the peptidase S14 family. In terms of assembly, component of the chloroplastic Clp protease core complex.

Its subcellular location is the plastid. The protein localises to the chloroplast stroma. It catalyses the reaction Hydrolysis of proteins to small peptides in the presence of ATP and magnesium. alpha-casein is the usual test substrate. In the absence of ATP, only oligopeptides shorter than five residues are hydrolyzed (such as succinyl-Leu-Tyr-|-NHMec, and Leu-Tyr-Leu-|-Tyr-Trp, in which cleavage of the -Tyr-|-Leu- and -Tyr-|-Trp bonds also occurs).. Its function is as follows. Cleaves peptides in various proteins in a process that requires ATP hydrolysis. Has a chymotrypsin-like activity. Plays a major role in the degradation of misfolded proteins. The chain is ATP-dependent Clp protease proteolytic subunit from Cycas taitungensis (Prince sago).